Consider the following 155-residue polypeptide: Biotin carboxyl carrier protein of acetyl-CoA carboxylase (155 aa).

In terms of domain architecture, Biotinyl-binding spans 72 to 155 (AASDELSGHL…EFDEPLIVIE (84 aa)). Position 121 is an N6-biotinyllysine (Lys-121).

In terms of assembly, homodimer.

Its pathway is lipid metabolism; fatty acid biosynthesis. This protein is a component of the acetyl coenzyme A carboxylase complex; first, biotin carboxylase catalyzes the carboxylation of the carrier protein and then the transcarboxylase transfers the carboxyl group to form malonyl-CoA. The polypeptide is Biotin carboxyl carrier protein of acetyl-CoA carboxylase (accB) (Haemophilus influenzae (strain ATCC 51907 / DSM 11121 / KW20 / Rd)).